Consider the following 216-residue polypeptide: Adenylate kinase (216 aa).

Position 10 to 15 (10 to 15) interacts with ATP; sequence GAGKGT. The segment at 30–59 is NMP; it reads STGDIFRANIKEKTPLGIEAKRYIDNGQLV. Residues Thr-31, Arg-36, 57–59, 85–88, and Gln-92 each bind AMP; these read QLV and GFPR. The segment at 126-163 is LID; it reads GRRVCTSCGASYHIRFNPPKIEGKCDICDNELIQRKDD. Arg-127 is a binding site for ATP. Cys-130 and Cys-133 together coordinate Zn(2+). ATP is bound at residue 136 to 137; the sequence is SY. Cys-150 and Cys-153 together coordinate Zn(2+). Residues Arg-160 and Arg-171 each coordinate AMP. Glu-199 contacts ATP.

This sequence belongs to the adenylate kinase family. As to quaternary structure, monomer.

Its subcellular location is the cytoplasm. The catalysed reaction is AMP + ATP = 2 ADP. It functions in the pathway purine metabolism; AMP biosynthesis via salvage pathway; AMP from ADP: step 1/1. Its function is as follows. Catalyzes the reversible transfer of the terminal phosphate group between ATP and AMP. Plays an important role in cellular energy homeostasis and in adenine nucleotide metabolism. This chain is Adenylate kinase, found in Clostridium botulinum (strain Langeland / NCTC 10281 / Type F).